A 1363-amino-acid chain; its full sequence is Vascular endothelial growth factor receptor 3 (1363 aa).

The signal sequence occupies residues 1 to 24; it reads MQPGAALNRRLWLCLGLLQGLANG. Over 25 to 775 the chain is Extracellular; sequence YSMTPPTLNI…EGSEDKGSME (751 aa). Residues Asn33, Asn104, Asn166, Asn251, Asn299, and Asn411 are each glycosylated (N-linked (GlcNAc...) asparagine). Ig-like C2-type domains lie at 44-118, 151-213, 230-326, 331-415, 422-552, 555-671, and 678-764; these read GDSL…YIKA, KDSM…WGDQ, YDIQ…TEVI, PFIS…ISLE, PHIH…FYVT, PDGF…KYLS, and PRLT…ASVA. 2 disulfide bridges follow: Cys51–Cys111 and Cys158–Cys206. An intrachain disulfide couples Cys252 to Cys310. 3 disulfides stabilise this stretch: Cys445/Cys534, Cys466/Cys486, and Cys578/Cys653. N-linked (GlcNAc...) asparagine glycosylation is found at Asn515, Asn527, Asn582, Asn594, and Asn683. Cys699 and Cys751 are disulfide-bonded. The N-linked (GlcNAc...) asparagine glycan is linked to Asn758. The helical transmembrane segment at 776 to 796 threads the bilayer; the sequence is IVILIGTGVIAVFFWVLLLLI. Residues 797-1363 lie on the Cytoplasmic side of the membrane; sequence FCNMKRPAHA…GSTFFADSNY (567 aa). 2 positions are modified to phosphotyrosine; by SRC: Tyr830 and Tyr833. The Protein kinase domain maps to 845-1173; sequence LHLGRVLGHG…DLVEILGDLL (329 aa). Residues 851–859 and Lys879 each bind ATP; that span reads LGHGAFGKV. Catalysis depends on Asp1037, which acts as the Proton acceptor. Tyr1063 is subject to Phosphotyrosine; by autocatalysis and SRC. 4 positions are modified to phosphotyrosine; by autocatalysis: Tyr1068, Tyr1230, Tyr1231, and Tyr1265. The span at 1289–1317 shows a compositional bias: basic and acidic residues; that stretch reads SRHRQEGSFSRKDPGQHMDISRGHPDLQG. Residues 1289-1330 form a disordered region; it reads SRHRQEGSFSRKDPGQHMDISRGHPDLQGRRRRPTQGAQGGK. Residues Tyr1333 and Tyr1337 each carry the phosphotyrosine; by autocatalysis and SRC modification. Residue Tyr1363 is modified to Phosphotyrosine; by autocatalysis.

Belongs to the protein kinase superfamily. Tyr protein kinase family. CSF-1/PDGF receptor subfamily. Interacts with VEGFC and VEGFD. Monomer in the absence of bound VEGFC or VEGFD. Homodimer in the presence of bound VEGFC or VEGFD. Can also form a heterodimer with KDR. Interacts with PTPN14; the interaction is enhanced by stimulation with VEGFC. Interacts with CRK, GRB2, PTK2/FAK1, SHC1, PIK3R1 and PTPN11/SHP-2. Identified in a complex with SRC and ITGB1. Identified in a complex with SRC and ITGB1. Post-translationally, autophosphorylated on tyrosine residues upon ligand binding. Autophosphorylation occurs in trans, i.e. one subunit of the dimeric receptor phosphorylates tyrosine residues on the other subunit. Phosphorylation in response to H(2)O(2) is mediated by a process that requires SRC and PRKCD activity. Phosphorylation at Tyr-1068 is required for autophosphorylation at additional tyrosine residues. Phosphorylation at Tyr-1063 and Tyr-1337 is important for interaction with CRK and subsequent activation of MAPK8. Phosphorylation at Tyr-1230, Tyr-1231 and Tyr-1337 is important for interaction with GRB2 and subsequent activation of the AKT1 and MAPK1/ERK2 and/or MAPK3/ERK1 signaling pathways. In response to endothelial cell adhesion onto collagen, can also be phosphorylated in the absence of FLT4 kinase activity by SRC.

The protein localises to the cell membrane. It localises to the cytoplasm. Its subcellular location is the nucleus. The catalysed reaction is L-tyrosyl-[protein] + ATP = O-phospho-L-tyrosyl-[protein] + ADP + H(+). Present in an inactive conformation in the absence of bound ligand. Binding of VEGFC or VEGFD leads to dimerization and activation by autophosphorylation on tyrosine residues. Its function is as follows. Tyrosine-protein kinase that acts as a cell-surface receptor for VEGFC and VEGFD, and plays an essential role in adult lymphangiogenesis and in the development of the vascular network and the cardiovascular system during embryonic development. Promotes proliferation, survival and migration of endothelial cells, and regulates angiogenic sprouting. Signaling by activated FLT4 leads to enhanced production of VEGFC, and to a lesser degree VEGFA, thereby creating a positive feedback loop that enhances FLT4 signaling. Modulates KDR signaling by forming heterodimers. Mediates activation of the MAPK1/ERK2, MAPK3/ERK1 signaling pathway, of MAPK8 and the JUN signaling pathway, and of the AKT1 signaling pathway. Phosphorylates SHC1. Mediates phosphorylation of PIK3R1, the regulatory subunit of phosphatidylinositol 3-kinase. Promotes phosphorylation of MAPK8 at 'Thr-183' and 'Tyr-185', and of AKT1 at 'Ser-473'. This Rattus norvegicus (Rat) protein is Vascular endothelial growth factor receptor 3 (Flt4).